We begin with the raw amino-acid sequence, 239 residues long: Ribosomal RNA small subunit methyltransferase G (239 aa).

Residues Gly-77, Phe-82, 128 to 129 (AE), and Arg-147 contribute to the S-adenosyl-L-methionine site. The segment at 216 to 239 (KKQSQTPKKFPRKPGTPNKSPIEG) is disordered.

It belongs to the methyltransferase superfamily. RNA methyltransferase RsmG family.

It localises to the cytoplasm. In terms of biological role, specifically methylates the N7 position of guanine in position 535 of 16S rRNA. This Bacillus licheniformis (strain ATCC 14580 / DSM 13 / JCM 2505 / CCUG 7422 / NBRC 12200 / NCIMB 9375 / NCTC 10341 / NRRL NRS-1264 / Gibson 46) protein is Ribosomal RNA small subunit methyltransferase G.